The sequence spans 448 residues: MKHEKGRSFYIHTFGCQMNQADSAIITAILMDGGFRVAGSQEDADIVILNTCAVRENAVERITHQLQFLRGAKRRKKSLLVGVAGCVPQHLKREMLEMFPVIDFLAGPDTYRNLPALIGDAEEGKRPAALEFRIEETYAGIDPLREVGVGAFVPVTRGCNNMCAFCVVPFTRGRERSQPFSAVMDEVRRVVEKGYGEITLLGQNVNSYADPEEGRDFASLLRAVSREAPGCRIRFTTSHPKDISPDLVDAIADSPNICNHVHLPVQSGSSRMLHRMNRGHGIDEYLETVALLRRRIPGVSLTTDLIAGFCGEEDEDHEATLALLREVRYDNAFMFYYSPRFGTAAWKTLADTVPLAVKKQRLQEIIDLQLSISAECLQEAVGSVVDVLAESESRRSTEQLMGRTGTNRAVVFDRGGARPGDRVSVLISKASSATLTGVNQGVLPAFYS.

The MTTase N-terminal domain maps to 7 to 123 (RSFYIHTFGC…LPALIGDAEE (117 aa)). 6 residues coordinate [4Fe-4S] cluster: cysteine 16, cysteine 52, cysteine 86, cysteine 159, cysteine 163, and cysteine 166. The region spanning 145–375 (REVGVGAFVP…IDLQLSISAE (231 aa)) is the Radical SAM core domain. The 64-residue stretch at 378–441 (QEAVGSVVDV…SATLTGVNQG (64 aa)) folds into the TRAM domain.

This sequence belongs to the methylthiotransferase family. MiaB subfamily. As to quaternary structure, monomer. The cofactor is [4Fe-4S] cluster.

The protein localises to the cytoplasm. The catalysed reaction is N(6)-dimethylallyladenosine(37) in tRNA + (sulfur carrier)-SH + AH2 + 2 S-adenosyl-L-methionine = 2-methylsulfanyl-N(6)-dimethylallyladenosine(37) in tRNA + (sulfur carrier)-H + 5'-deoxyadenosine + L-methionine + A + S-adenosyl-L-homocysteine + 2 H(+). Catalyzes the methylthiolation of N6-(dimethylallyl)adenosine (i(6)A), leading to the formation of 2-methylthio-N6-(dimethylallyl)adenosine (ms(2)i(6)A) at position 37 in tRNAs that read codons beginning with uridine. The polypeptide is tRNA-2-methylthio-N(6)-dimethylallyladenosine synthase (Chlorobium phaeovibrioides (strain DSM 265 / 1930) (Prosthecochloris vibrioformis (strain DSM 265))).